Consider the following 1097-residue polypeptide: Mitochondrial distribution and morphology protein 34 (1097 aa).

An SMP-LTD domain is found at 1–198 (MSFNFKWPTF…LPGIIHRLSQ (198 aa)). Disordered stretches follow at residues 204–305 (EAKS…PLHS), 317–343 (AAFP…SGFS), 390–427 (QSDD…LDAV), 480–520 (DDQP…TSSL), 556–600 (PEVD…SSRT), 645–675 (LDAE…RDLS), 716–817 (GQNA…SPGV), and 923–1097 (GSSA…AIRE). Residues 205-229 (AKSEKDKVKQKAEAEEPPARSREPT) show a composition bias toward basic and acidic residues. Basic residues predominate over residues 252-263 (RKSHSKAKKHSR). The segment covering 274–283 (SPCQSPQRPR) has biased composition (low complexity). The span at 284–293 (QSPRRPRHVA) shows a compositional bias: basic residues. Over residues 406-416 (SSSHDGKHDEG) the composition is skewed to basic and acidic residues. 2 stretches are compositionally biased toward low complexity: residues 508 to 519 (SSRSDRSACTSS) and 572 to 586 (GGTP…RFGS). Positions 662–675 (TNPTSRESSYRDLS) are enriched in polar residues. Residues 759 to 779 (GMSATPARTRASAAASARSRP) are compositionally biased toward low complexity. Residues 784–796 (YATSPPGDSSGWQ) show a composition bias toward polar residues. Residues 923-943 (GSSAASGTGTTSGSSQTGANA) are compositionally biased toward low complexity. Polar residues predominate over residues 1004–1024 (SNKPNNTSTGQGEDSQDNSAA). The segment covering 1045–1059 (ASGSSASSAITDSSS) has biased composition (low complexity).

Belongs to the MDM34 family. In terms of assembly, component of the ER-mitochondria encounter structure (ERMES) or MDM complex, composed of MMM1, MDM10, MDM12 and MDM34.

Its subcellular location is the mitochondrion outer membrane. Component of the ERMES/MDM complex, which serves as a molecular tether to connect the endoplasmic reticulum (ER) and mitochondria. Components of this complex are involved in the control of mitochondrial shape and protein biogenesis, and function in nonvesicular lipid trafficking between the ER and mitochondria. MDM34 is required for the interaction of the ER-resident membrane protein MMM1 and the outer mitochondrial membrane-resident beta-barrel protein MDM10. This is Mitochondrial distribution and morphology protein 34 from Mycosarcoma maydis (Corn smut fungus).